The primary structure comprises 423 residues: Subtilisin-like protease 2 (423 aa).

Residues 1–17 (MQLLNLGLLLLLPFVAG) form the signal peptide. A propeptide spanning residues 18–123 (EIAPQPEPLR…VHPDQHVYLA (106 aa)) is cleaved from the precursor. The 87-residue stretch at 37 to 123 (QYIVTLKEGL…VHPDQHVYLA (87 aa)) folds into the Inhibitor I9 domain. Residues 132–423 (RWGLGYMSSK…RKFTLPKNTK (292 aa)) enclose the Peptidase S8 domain. Active-site charge relay system residues include Asp-170 and His-202. 3 N-linked (GlcNAc...) asparagine glycosylation sites follow: Asn-249, Asn-262, and Asn-349. The active-site Charge relay system is the Ser-358. A glycan (N-linked (GlcNAc...) asparagine) is linked at Asn-389.

It belongs to the peptidase S8 family.

The protein localises to the secreted. In terms of biological role, secreted subtilisin-like serine protease with keratinolytic activity that contributes to pathogenicity. The sequence is that of Subtilisin-like protease 2 (SUB2) from Arthroderma otae (strain ATCC MYA-4605 / CBS 113480) (Microsporum canis).